Consider the following 256-residue polypeptide: Acetyl-coenzyme A carboxylase carboxyl transferase subunit alpha (256 aa).

The region spanning 1–236 (MTDVSRVLKE…KANLIEQITS (236 aa)) is the CoA carboxyltransferase C-terminal domain.

Belongs to the AccA family. In terms of assembly, acetyl-CoA carboxylase is a heterohexamer composed of biotin carboxyl carrier protein (AccB), biotin carboxylase (AccC) and two subunits each of ACCase subunit alpha (AccA) and ACCase subunit beta (AccD).

It localises to the cytoplasm. It carries out the reaction N(6)-carboxybiotinyl-L-lysyl-[protein] + acetyl-CoA = N(6)-biotinyl-L-lysyl-[protein] + malonyl-CoA. Its pathway is lipid metabolism; malonyl-CoA biosynthesis; malonyl-CoA from acetyl-CoA: step 1/1. Component of the acetyl coenzyme A carboxylase (ACC) complex. First, biotin carboxylase catalyzes the carboxylation of biotin on its carrier protein (BCCP) and then the CO(2) group is transferred by the carboxyltransferase to acetyl-CoA to form malonyl-CoA. In Streptococcus pyogenes serotype M2 (strain MGAS10270), this protein is Acetyl-coenzyme A carboxylase carboxyl transferase subunit alpha.